We begin with the raw amino-acid sequence, 448 residues long: Probable xyloglucan 6-xylosyltransferase 1 (448 aa).

The Cytoplasmic segment spans residues 1-19 (MWVAERVVGERRMREIQRF). Residues 20–42 (ARNAKLTVVCLLLTVVVLRGTVG) form a helical; Signal-anchor for type II membrane protein membrane-spanning segment. At 43-448 (AGKFGTPQQD…AFKAMKTTST (406 aa)) the chain is on the lumenal side. A disordered region spans residues 71 to 113 (HHDALSRGGGSSSSSGRAAQRDDEPDPPPRTLRDPPYTLGPKI). Asparagine 421 carries an N-linked (GlcNAc...) asparagine glycan.

Belongs to the glycosyltransferase 34 family.

It localises to the golgi apparatus membrane. The catalysed reaction is Transfers an alpha-D-xylosyl residue from UDP-D-xylose to a glucose residue in xyloglucan, forming an alpha-(1-&gt;6)-D-xylosyl-D-glucose linkage.. Its function is as follows. Probable xyloglucan xylosyltransferase involved in the biosynthesis of xyloglucan in roots. The polypeptide is Probable xyloglucan 6-xylosyltransferase 1 (Oryza sativa subsp. indica (Rice)).